Here is a 111-residue protein sequence, read N- to C-terminus: uncharacterized protein (111 aa).

Residues 1 to 26 (MDLKDGVEEEEGAGENGKGGTHAQRV) are disordered.

This is an uncharacterized protein from Caenorhabditis elegans.